The chain runs to 181 residues: Transmembrane protein 154 (181 aa).

An N-terminal signal peptide occupies residues 1–22; sequence MTVPCAALVLALGLAFGQSSQG. A disordered region spans residues 19 to 47; the sequence is SSQGNDEESEYSGQSITEEENSEDETTRS. Residues 23 to 74 are Extracellular-facing; that stretch reads NDEESEYSGQSITEEENSEDETTRSALATVTTEALAENVNSTHTNDTSNQVE. The helical transmembrane segment at 75 to 95 threads the bilayer; sequence FILMVAIPLAALLILLFMVLI. Residues 96–181 are Cytoplasmic-facing; sequence ATYFKSKRPK…PNPSPSDNES (86 aa). A disordered region spans residues 103 to 122; the sequence is RPKQEPSSQGSQSALQTHEL. Residues 107–118 show a composition bias toward polar residues; that stretch reads EPSSQGSQSALQ. Phosphotyrosine is present on Y160. Positions 161 to 181 are disordered; that stretch reads ECLPTLKEEKEPNPSPSDNES. S177 is subject to Phosphoserine.

Its subcellular location is the membrane. In Mus musculus (Mouse), this protein is Transmembrane protein 154 (Tmem154).